We begin with the raw amino-acid sequence, 355 residues long: Uroporphyrinogen decarboxylase (355 aa).

Residues 27–31 (RQAGR), Asp77, Tyr154, Thr209, and His327 contribute to the substrate site.

Belongs to the uroporphyrinogen decarboxylase family. As to quaternary structure, homodimer.

It localises to the cytoplasm. The enzyme catalyses uroporphyrinogen III + 4 H(+) = coproporphyrinogen III + 4 CO2. The protein operates within porphyrin-containing compound metabolism; protoporphyrin-IX biosynthesis; coproporphyrinogen-III from 5-aminolevulinate: step 4/4. Catalyzes the decarboxylation of four acetate groups of uroporphyrinogen-III to yield coproporphyrinogen-III. This Yersinia pestis bv. Antiqua (strain Antiqua) protein is Uroporphyrinogen decarboxylase.